A 90-amino-acid polypeptide reads, in one-letter code: Nodulation protein F (90 aa).

The Carrier domain occupies 4-89 (QLESEIIGII…RHSGSHPRLA (86 aa)). O-(pantetheine 4'-phosphoryl)serine is present on Ser-46. Residues 65-90 (RDEHGRGVVGSPERRRHSGSHPRLAH) are disordered. Residues 78-90 (RRRHSGSHPRLAH) show a composition bias toward basic residues.

In terms of processing, 4'-phosphopantetheine is transferred from CoA to a specific serine of apo-NodF.

Its function is as follows. Proposed to synthesize nod factor fatty acyl chain. Involved in trans-2,trans-4,trans-6,cis-11-octadecatetraenoic acid biosynthesis. The polypeptide is Nodulation protein F (nodF) (Rhizobium meliloti (Ensifer meliloti)).